Reading from the N-terminus, the 39-residue chain is Photosystem II reaction center protein L (39 aa).

A helical transmembrane segment spans residues S18–F38.

Belongs to the PsbL family. PSII is composed of 1 copy each of membrane proteins PsbA, PsbB, PsbC, PsbD, PsbE, PsbF, PsbH, PsbI, PsbJ, PsbK, PsbL, PsbM, PsbT, PsbX, PsbY, PsbZ, Psb30/Ycf12, peripheral proteins PsbO, CyanoQ (PsbQ), PsbU, PsbV and a large number of cofactors. It forms dimeric complexes.

It localises to the cellular thylakoid membrane. Its function is as follows. One of the components of the core complex of photosystem II (PSII). PSII is a light-driven water:plastoquinone oxidoreductase that uses light energy to abstract electrons from H(2)O, generating O(2) and a proton gradient subsequently used for ATP formation. It consists of a core antenna complex that captures photons, and an electron transfer chain that converts photonic excitation into a charge separation. This subunit is found at the monomer-monomer interface and is required for correct PSII assembly and/or dimerization. The sequence is that of Photosystem II reaction center protein L from Synechococcus sp. (strain WH7803).